A 350-amino-acid polypeptide reads, in one-letter code: Phosphoribosylformylglycinamidine cyclo-ligase (350 aa).

This sequence belongs to the AIR synthase family.

It localises to the cytoplasm. It catalyses the reaction 2-formamido-N(1)-(5-O-phospho-beta-D-ribosyl)acetamidine + ATP = 5-amino-1-(5-phospho-beta-D-ribosyl)imidazole + ADP + phosphate + H(+). It participates in purine metabolism; IMP biosynthesis via de novo pathway; 5-amino-1-(5-phospho-D-ribosyl)imidazole from N(2)-formyl-N(1)-(5-phospho-D-ribosyl)glycinamide: step 2/2. In Cupriavidus metallidurans (strain ATCC 43123 / DSM 2839 / NBRC 102507 / CH34) (Ralstonia metallidurans), this protein is Phosphoribosylformylglycinamidine cyclo-ligase.